Here is a 206-residue protein sequence, read N- to C-terminus: 3-demethoxyubiquinol 3-hydroxylase (206 aa).

Fe cation-binding residues include Glu-55, Glu-85, His-88, Glu-137, Glu-169, and His-172.

This sequence belongs to the COQ7 family. It depends on Fe cation as a cofactor.

The protein localises to the cell membrane. The enzyme catalyses a 5-methoxy-2-methyl-3-(all-trans-polyprenyl)benzene-1,4-diol + AH2 + O2 = a 3-demethylubiquinol + A + H2O. Its pathway is cofactor biosynthesis; ubiquinone biosynthesis. Its function is as follows. Catalyzes the hydroxylation of 2-nonaprenyl-3-methyl-6-methoxy-1,4-benzoquinol during ubiquinone biosynthesis. The sequence is that of 3-demethoxyubiquinol 3-hydroxylase from Chromobacterium violaceum (strain ATCC 12472 / DSM 30191 / JCM 1249 / CCUG 213 / NBRC 12614 / NCIMB 9131 / NCTC 9757 / MK).